Consider the following 145-residue polypeptide: LIRP (145 aa).

A signal peptide (or 22) is located at residues 1 to 19 (MWKLCLRLLAVLAVCLSTA). 2 propeptides span residues 20-33 (TQAQSDLFLLSPKR) and 117-122 (FRRRTR). 3 disulfides stabilise this stretch: C44/C129, C56/C142, and C128/C133.

This sequence belongs to the insulin family. In terms of assembly, heterodimer of a B chain and an A chain linked by two disulfide bonds.

Its subcellular location is the secreted. The chain is LIRP from Locusta migratoria (Migratory locust).